The sequence spans 2483 residues: Cation-independent mannose-6-phosphate receptor (2483 aa).

The signal sequence occupies residues 1-35 (MRAVQLGPVPSGPRVALLPPLLLLLLLAAAGSAQA). Residues 36 to 2295 (QAVDLDALCS…YKGLSERSQA (2260 aa)) are Lumenal-facing. MRH domains follow at residues 42 to 158 (ALCS…ACKK), 167 to 315 (VPCY…ACHR), 321 to 463 (ESCS…ACIK), 468 to 613 (LLCG…ACVL), 619 to 755 (ENCT…ACPE), 758 to 917 (LECM…ACPI), 925 to 1072 (QACS…ACTP), 1075 to 1212 (VDCQ…ACPV), and 1218 to 1356 (DNCQ…ACPP). 2 cysteine pairs are disulfide-bonded: Cys-44/Cys-64 and Cys-72/Cys-79. Asn-107 carries N-linked (GlcNAc...) asparagine glycosylation. Intrachain disulfides connect Cys-112-Cys-144, Cys-129-Cys-156, Cys-169-Cys-207, Cys-223-Cys-230, Cys-270-Cys-301, Cys-283-Cys-313, Cys-323-Cys-361, and Cys-369-Cys-377. Residues Asn-395 and Asn-430 are each glycosylated (N-linked (GlcNAc...) asparagine). Intrachain disulfides connect Cys-415/Cys-449, Cys-429/Cys-461, Cys-470/Cys-513, and Cys-525/Cys-532. N-linked (GlcNAc...) asparagine glycans are attached at residues Asn-537 and Asn-575. Disulfide bonds link Cys-566/Cys-599 and Cys-580/Cys-611. Asn-620 carries an N-linked (GlcNAc...) asparagine glycan. Intrachain disulfides connect Cys-621–Cys-658, Cys-666–Cys-673, Cys-724–Cys-753, Cys-760–Cys-807, and Cys-816–Cys-823. Asn-740 carries N-linked (GlcNAc...) asparagine glycosylation. Asn-864 carries an N-linked (GlcNAc...) asparagine glycan. Cystine bridges form between Cys-868/Cys-903, Cys-886/Cys-915, Cys-927/Cys-964, Cys-970/Cys-981, Cys-1035/Cys-1070, Cys-1077/Cys-1118, and Cys-1127/Cys-1135. A glycan (N-linked (GlcNAc...) asparagine) is linked at Asn-944. Asn-1157 carries an N-linked (GlcNAc...) asparagine glycan. Intrachain disulfides connect Cys-1170–Cys-1198, Cys-1183–Cys-1210, Cys-1220–Cys-1255, and Cys-1263–Cys-1275. N-linked (GlcNAc...) asparagine glycosylation is present at Asn-1239. Asn-1305 is a glycosylation site (N-linked (GlcNAc...) asparagine). Disulfide bonds link Cys-1312–Cys-1342 and Cys-1326–Cys-1354. Asn-1358 carries an N-linked (GlcNAc...) asparagine glycan. MRH domains lie at 1360–1501 (TECS…ACPV), 1507–1641 (DDCQ…ACEQ), 1643–1790 (TECT…VCPD), 1795–1982 (QGCA…VCPP), 1985–2120 (MECK…ACAV), and 2128–2273 (VNGT…VCPL). 2 disulfide bridges follow: Cys-1362/Cys-1401 and Cys-1413/Cys-1420. Asn-1423 carries an N-linked (GlcNAc...) asparagine glycan. Cystine bridges form between Cys-1454-Cys-1487, Cys-1469-Cys-1499, Cys-1509-Cys-1546, Cys-1552-Cys-1559, Cys-1591-Cys-1627, Cys-1607-Cys-1639, Cys-1645-Cys-1688, Cys-1699-Cys-1706, Cys-1743-Cys-1776, Cys-1759-Cys-1788, Cys-1797-Cys-1832, Cys-1843-Cys-1849, Cys-1886-Cys-1968, Cys-1896-Cys-1920, Cys-1910-Cys-1935, Cys-1950-Cys-1980, Cys-1987-Cys-2022, Cys-2032-Cys-2039, Cys-2075-Cys-2106, and Cys-2089-Cys-2118. Asn-1532 is a glycosylation site (N-linked (GlcNAc...) asparagine). Residue Asn-1649 is glycosylated (N-linked (GlcNAc...) asparagine). N-linked (GlcNAc...) asparagine glycosylation occurs at Asn-1750. Asn-1809 carries an N-linked (GlcNAc...) asparagine glycan. A Fibronectin type-II domain is found at 1891 to 1937 (DDGEPCVFPFIYKGKSYDECVLEGRAKLWCSKTANYDRDHEWGFCRQ). N-linked (GlcNAc...) asparagine glycosylation occurs at Asn-2078. An N-linked (GlcNAc...) asparagine glycan is attached at Asn-2129. 3 disulfides stabilise this stretch: Cys-2181–Cys-2187, Cys-2225–Cys-2259, and Cys-2241–Cys-2271. The chain crosses the membrane as a helical span at residues 2296–2316 (VGAVLSLLLVALTGCLLALLL). The Cytoplasmic segment spans residues 2317–2483 (HKKERRETVI…DDSDEDLLHI (167 aa)). The residue at position 2342 (Lys-2342) is an N6-acetyllysine. Ser-2401 carries the phosphoserine modification. A disordered region spans residues 2415–2483 (SGRGAEVESS…DDSDEDLLHI (69 aa)). The residue at position 2417 (Arg-2417) is an Omega-N-methylarginine. Basic and acidic residues-rich tracts occupy residues 2434–2451 (VLKEREGERLGLVRGEKA) and 2471–2483 (SFHDDSDEDLLHI). Ser-2471 and Ser-2476 each carry phosphoserine.

This sequence belongs to the MRL1/IGF2R family. As to quaternary structure, binds HA-I and HA-II plasma membrane adapters. Interacts with DPP4; the interaction is direct. Binds GGA1, GGA2 and GGA3. Interacts with the heterotrimeric retromer cargo-selective complex (CSC), formed by VPS26 (VPS26A or VPS26B), VPS29 and VPS35; which is involved in retrograde trafficking of the receptor from endosomes to the Golgi apparatus. In terms of processing, palmitoylated. Undergoes cysteine S-palmitoylation which promotes interaction with the retromer cargo-selective complex which mediates its retrograde trafficking to the Golgi apparatus.

It localises to the golgi apparatus membrane. It is found in the endosome membrane. In terms of biological role, mediates the transport of phosphorylated lysosomal enzymes from the Golgi complex and the cell surface to lysosomes. Lysosomal enzymes bearing phosphomannosyl residues bind specifically to mannose-6-phosphate receptors in the Golgi apparatus and the resulting receptor-ligand complex is transported to an acidic prelysosomal compartment where the low pH mediates the dissociation of the complex. The receptor is then recycled back to the Golgi for another round of trafficking through its binding to the retromer. This receptor also binds IGF2. Acts as a positive regulator of T-cell coactivation by binding DPP4. The protein is Cation-independent mannose-6-phosphate receptor (Igf2r) of Mus musculus (Mouse).